The chain runs to 243 residues: Uridylate kinase (243 aa).

K18–G21 contacts ATP. A UMP-binding site is contributed by G59. Residues G60 and R64 each coordinate ATP. UMP is bound by residues D79 and M140–T147. 2 residues coordinate ATP: Y173 and D176.

It belongs to the UMP kinase family. In terms of assembly, homohexamer.

It localises to the cytoplasm. It catalyses the reaction UMP + ATP = UDP + ADP. The protein operates within pyrimidine metabolism; CTP biosynthesis via de novo pathway; UDP from UMP (UMPK route): step 1/1. Inhibited by UTP. Its function is as follows. Catalyzes the reversible phosphorylation of UMP to UDP. The polypeptide is Uridylate kinase (Corynebacterium glutamicum (strain R)).